The following is a 165-amino-acid chain: MGDKEGACFMKIAKYLDKALEYLSILALVIMISLVFFNSVLRYFFDSGIAFSEEFSRICFVYMISFGIILVAKDKAHLTVDIIIPALPEQYRKIVLIVANICVLIAMIFIAYGALQLMSLTYTQQMPATGISSSFLYLAAVISAVSYFFIVMFSMIKDYKESSDK.

Helical transmembrane passes span 20–40 (LEYL…FNSV), 51–71 (FSEE…IILV), 94–114 (IVLI…AYGA), and 136–156 (LYLA…FSMI).

Belongs to the TRAP transporter small permease family.

It localises to the cell inner membrane. The protein is Putative TRAP transporter small permease protein HI_0051 of Haemophilus influenzae (strain ATCC 51907 / DSM 11121 / KW20 / Rd).